The sequence spans 258 residues: Alpha-fibrinogenase (258 aa).

The N-terminal stretch at 1 to 18 (MVLIRVLANLVMLHLSYG) is a signal peptide. A propeptide spanning residues 19–24 (EKSSEL) is cleaved from the precursor. The Peptidase S1 domain occupies 25–249 (VIGGRPCNIN…YNDWIQSIIA (225 aa)). 6 cysteine pairs are disulfide-bonded: Cys-31-Cys-163, Cys-50-Cys-66, Cys-98-Cys-256, Cys-142-Cys-210, Cys-174-Cys-189, and Cys-200-Cys-225. N-linked (GlcNAc...) asparagine glycosylation is present at Asn-44. Residue His-65 is the Charge relay system of the active site. N-linked (GlcNAc...) asparagine glycans are attached at residues Asn-79 and Asn-101. Asp-110 acts as the Charge relay system in catalysis. The Charge relay system role is filled by Ser-204.

The protein belongs to the peptidase S1 family. Snake venom subfamily. Monomer. In terms of processing, glycosylated. Contains 8.5% of hexoses, 5.8% of hexosamines and 0.8% of sialic acids. As to expression, expressed by the venom gland.

Its subcellular location is the secreted. With respect to regulation, inhibited by diisopropylfluorophosphate (DFP) and PMSF, and partially by soybean trypsin inhibitor, but not by EDTA. Functionally, degrades alpha chain of fibrinogen (FGA), and has strong caseinolytic activity. Cleaves oxidized insulin B-chain at '40-Tyr-|-Leu-41', '48-Phe-|-Phe-49' and '49-Phe-|-Tyr-50', and glucagon at the bonds '62-Tyr-|-Ser-63', 66-Leu-|-Asp-67' and '78-Leu-|-Met-79' bonds. The sequence is that of Alpha-fibrinogenase from Macrovipera lebetinus (Levantine viper).